Consider the following 245-residue polypeptide: OVARIAN TUMOR DOMAIN-containing deubiquitinating enzyme 11 (245 aa).

The interval 1-37 (MDENHRNPFANASTSARASGSTSASSNSSFSSSVADT) is disordered. Over residues 10–35 (ANASTSARASGSTSASSNSSFSSSVA) the composition is skewed to low complexity. An OTU domain is found at 101-225 (LAELQMEGDG…EVHYNSLYAN (125 aa)). Aspartate 109 is an active-site residue. Cysteine 112 functions as the Nucleophile in the catalytic mechanism. Histidine 218 is a catalytic residue.

The protein belongs to the peptidase C85 family.

The enzyme catalyses Thiol-dependent hydrolysis of ester, thioester, amide, peptide and isopeptide bonds formed by the C-terminal Gly of ubiquitin (a 76-residue protein attached to proteins as an intracellular targeting signal).. Functionally, hydrolase that can remove conjugated ubiquitin from proteins in vitro and may therefore play an important regulatory role at the level of protein turnover by preventing degradation. Inactive cysteine protease. This Arabidopsis thaliana (Mouse-ear cress) protein is OVARIAN TUMOR DOMAIN-containing deubiquitinating enzyme 11.